A 377-amino-acid polypeptide reads, in one-letter code: Lactosylceramide 1,3-N-acetyl-beta-D-glucosaminyltransferase (377 aa).

Residues 1–12 lie on the Cytoplasmic side of the membrane; the sequence is MLISARRLRRCQ. A helical; Signal-anchor for type II membrane protein transmembrane segment spans residues 13 to 30; the sequence is FFQLLTSCFVLSLMALLV. Over 31–377 the chain is Lumenal; sequence QEDNSLINHV…DTYPCSAAWS (347 aa). Asn56, Asn167, and Asn275 each carry an N-linked (GlcNAc...) asparagine glycan.

This sequence belongs to the glycosyltransferase 31 family.

The protein localises to the golgi apparatus membrane. The enzyme catalyses a beta-D-Gal-(1-&gt;4)-beta-D-Glc-(1&lt;-&gt;1)-Cer(d18:1(4E)) + UDP-N-acetyl-alpha-D-glucosamine = a beta-D-GlcNAc-(1-&gt;3)-beta-D-Gal-(1-&gt;4)-beta-D-Glc-(1&lt;-&gt;1)-Cer(d18:1(4E)) + UDP + H(+). It carries out the reaction a neolactoside nLc4Cer(d18:1(4E)) + UDP-N-acetyl-alpha-D-glucosamine = a neolactoside IV(3)-beta-GlcNAc-nLc4Cer(d18:1(4E)) + UDP + H(+). It functions in the pathway protein modification; protein glycosylation. Functionally, beta-1,3-N-acetylglucosaminyltransferase that plays a key role in the synthesis of lacto- or neolacto-series carbohydrate chains on glycolipids. The chain is Lactosylceramide 1,3-N-acetyl-beta-D-glucosaminyltransferase (b3gnt5) from Xenopus tropicalis (Western clawed frog).